The sequence spans 256 residues: Protein FixA (256 aa).

The protein belongs to the ETF beta-subunit/FixA family. As to quaternary structure, heterodimer of FixA and FixB.

It functions in the pathway amine and polyamine metabolism; carnitine metabolism. Required for anaerobic carnitine reduction. May bring reductant to CaiA. This is Protein FixA from Salmonella dublin (strain CT_02021853).